The primary structure comprises 125 residues: Small ribosomal subunit protein eS6 (125 aa).

The protein belongs to the eukaryotic ribosomal protein eS6 family.

The protein is Small ribosomal subunit protein eS6 of Thermococcus onnurineus (strain NA1).